The sequence spans 583 residues: Probable GTP diphosphokinase CRSH, chloroplastic (583 aa).

A chloroplast-targeting transit peptide spans 1–58 (MSVIRPSPIPIPRCRSQVLHRRLYSIQLIQRRRRRWNPRSEVEDTAIESTARSPEAAG). In terms of domain architecture, HD spans 112–212 (PLSKALSLSI…MDLVSKLDEM (101 aa)). 2 consecutive EF-hand domains span residues 470 to 505 (TTTN…LGAP) and 507 to 539 (EDAE…VEFM). Residues Asp483, Asn485, Asp487, Met489, Glu494, Asp517, Asn519, Asp521, Ser523, and Glu528 each coordinate Ca(2+).

This sequence belongs to the RelA/SpoT family. Expressed in shoots, cotyledons, rosette and cauline leaves, stems, sepals, pistils and siliques.

Its subcellular location is the plastid. It is found in the chloroplast. It carries out the reaction GTP + ATP = guanosine 3'-diphosphate 5'-triphosphate + AMP. Its activity is regulated as follows. Activated by calcium. Its function is as follows. Possesses calcium-dependent ppGpp (guanosine 3'-diphosphate 5'-diphosphate) synthetase activity in vitro and is able to functionally complement E.coli relA mutants. Plays an important role in the timing adjustment of pistil and pollen maturation required for successful pollination. May be involved in a rapid plant ppGpp-mediated response to pathogens and other stresses. The protein is Probable GTP diphosphokinase CRSH, chloroplastic (CRSH) of Arabidopsis thaliana (Mouse-ear cress).